A 465-amino-acid polypeptide reads, in one-letter code: Alpha-2A adrenergic receptor (465 aa).

Residues 1 to 48 are Extracellular-facing; that stretch reads MFRQEQPLAEGSFAPMGSLQPEAGNASWNGTEAPGGGARATPYSLQVT. N-linked (GlcNAc...) asparagine glycans are attached at residues asparagine 25 and asparagine 29. The chain crosses the membrane as a helical span at residues 49–74; sequence LTLVCLAGLLMLFTVFGNVLVIIAVF. At 75 to 85 the chain is on the cytoplasmic side; it reads TSRALKAPQNL. The chain crosses the membrane as a helical span at residues 86–111; that stretch reads FLVSLASADILVATLVIPFSLANEVM. Topologically, residues 112 to 121 are extracellular; sequence GYWYFGKAWC. A disulfide bond links cysteine 121 and cysteine 203. A helical transmembrane segment spans residues 122–144; it reads EIYLALDVLFCTSSIVHLCAISL. Topologically, residues 145–164 are cytoplasmic; that stretch reads DRYWSITQAIEYNLKRTPRR. A helical transmembrane segment spans residues 165 to 188; sequence IKAIIVTVWVISAVISFPPLISIE. The Extracellular portion of the chain corresponds to 189-207; that stretch reads KKAGGGGQQPAEPRCEIND. A helical transmembrane segment spans residues 208–232; it reads QKWYVISSCIGSFFAPCLIMILVYV. Topologically, residues 233 to 389 are cytoplasmic; sequence RIYQIAKRRT…RQNREKRFTF (157 aa). The interval 242 to 377 is disordered; the sequence is TRVPPSRRGP…RGGVAKASRW (136 aa). Over residues 313-330 the composition is skewed to basic and acidic residues; it reads SSEHAERPPGPRRSERGP. A Phosphoserine modification is found at serine 346. Omega-N-methylarginine is present on arginine 368. The chain crosses the membrane as a helical span at residues 390–414; it reads VLAVVIGVFVVCWFPFFFTYTLTAV. The Extracellular portion of the chain corresponds to 415–424; that stretch reads GCSVPPTLFK. Residues 425–445 traverse the membrane as a helical segment; that stretch reads FFFWFGYCNSSLNPVIYTIFN. At 446-465 the chain is on the cytoplasmic side; the sequence is HDFRRAFKKILCRGDRKRIV. Cysteine 457 carries the S-palmitoyl cysteine lipid modification.

This sequence belongs to the G-protein coupled receptor 1 family. Adrenergic receptor subfamily. ADRA2A sub-subfamily.

It localises to the cell membrane. Alpha-2 adrenergic receptors mediate the catecholamine-induced inhibition of adenylate cyclase through the action of G proteins. The polypeptide is Alpha-2A adrenergic receptor (Sus scrofa (Pig)).